Here is a 134-residue protein sequence, read N- to C-terminus: D-ribose pyranase (134 aa).

H20 functions as the Proton donor in the catalytic mechanism. Substrate is bound by residues D28, H101, and 123–125 (YCN).

This sequence belongs to the RbsD / FucU family. RbsD subfamily. In terms of assembly, homodecamer.

It is found in the cytoplasm. The enzyme catalyses beta-D-ribopyranose = beta-D-ribofuranose. Its pathway is carbohydrate metabolism; D-ribose degradation; D-ribose 5-phosphate from beta-D-ribopyranose: step 1/2. Its function is as follows. Catalyzes the interconversion of beta-pyran and beta-furan forms of D-ribose. This chain is D-ribose pyranase, found in Pseudomonas fluorescens (strain ATCC BAA-477 / NRRL B-23932 / Pf-5).